A 177-amino-acid polypeptide reads, in one-letter code: Endoribonuclease YbeY (177 aa).

The Zn(2+) site is built by H118, H122, and H128.

This sequence belongs to the endoribonuclease YbeY family. Zn(2+) serves as cofactor.

Its subcellular location is the cytoplasm. In terms of biological role, single strand-specific metallo-endoribonuclease involved in late-stage 70S ribosome quality control and in maturation of the 3' terminus of the 16S rRNA. In Mycobacterium bovis (strain ATCC BAA-935 / AF2122/97), this protein is Endoribonuclease YbeY.